Here is a 76-residue protein sequence, read N- to C-terminus: Cytochrome c oxidase subunit 6C-2 (76 aa).

The Mitochondrial matrix segment spans residues Gly4–Gly14. Residues Leu15 to Arg55 traverse the membrane as a helical segment. The Mitochondrial intermembrane portion of the chain corresponds to Asn56–Lys76. Ser74 carries the phosphoserine modification.

The protein belongs to the cytochrome c oxidase subunit 6c family. In terms of assembly, component of the cytochrome c oxidase (complex IV, CIV), a multisubunit enzyme composed of 14 subunits. The complex is composed of a catalytic core of 3 subunits MT-CO1, MT-CO2 and MT-CO3, encoded in the mitochondrial DNA, and 11 supernumerary subunits COX4I, COX5A, COX5B, COX6A, COX6B, COX6C, COX7A, COX7B, COX7C, COX8 and NDUFA4, which are encoded in the nuclear genome. The complex exists as a monomer or a dimer and forms supercomplexes (SCs) in the inner mitochondrial membrane with NADH-ubiquinone oxidoreductase (complex I, CI) and ubiquinol-cytochrome c oxidoreductase (cytochrome b-c1 complex, complex III, CIII), resulting in different assemblies (supercomplex SCI(1)III(2)IV(1) and megacomplex MCI(2)III(2)IV(2)).

Its subcellular location is the mitochondrion inner membrane. Its pathway is energy metabolism; oxidative phosphorylation. Functionally, component of the cytochrome c oxidase, the last enzyme in the mitochondrial electron transport chain which drives oxidative phosphorylation. The respiratory chain contains 3 multisubunit complexes succinate dehydrogenase (complex II, CII), ubiquinol-cytochrome c oxidoreductase (cytochrome b-c1 complex, complex III, CIII) and cytochrome c oxidase (complex IV, CIV), that cooperate to transfer electrons derived from NADH and succinate to molecular oxygen, creating an electrochemical gradient over the inner membrane that drives transmembrane transport and the ATP synthase. Cytochrome c oxidase is the component of the respiratory chain that catalyzes the reduction of oxygen to water. Electrons originating from reduced cytochrome c in the intermembrane space (IMS) are transferred via the dinuclear copper A center (CU(A)) of subunit 2 and heme A of subunit 1 to the active site in subunit 1, a binuclear center (BNC) formed by heme A3 and copper B (CU(B)). The BNC reduces molecular oxygen to 2 water molecules using 4 electrons from cytochrome c in the IMS and 4 protons from the mitochondrial matrix. The polypeptide is Cytochrome c oxidase subunit 6C-2 (Cox6c2) (Rattus norvegicus (Rat)).